The primary structure comprises 189 residues: Elongation factor P 2 (189 aa).

The protein belongs to the elongation factor P family.

The protein resides in the cytoplasm. It participates in protein biosynthesis; polypeptide chain elongation. Functionally, involved in peptide bond synthesis. Stimulates efficient translation and peptide-bond synthesis on native or reconstituted 70S ribosomes in vitro. Probably functions indirectly by altering the affinity of the ribosome for aminoacyl-tRNA, thus increasing their reactivity as acceptors for peptidyl transferase. This is Elongation factor P 2 from Lactobacillus acidophilus (strain ATCC 700396 / NCK56 / N2 / NCFM).